The sequence spans 415 residues: MPASTLNDLLEAGVTGRTVLIRSDLNVPLDGDTVTDDGRIRASLPAIRDLAEAGARVIVMAHLGRPKGEPDPAYSLRPVAARMAELLGADVALAADVTGDDARAQAAALQDGQVLLLENVRFDARETSKDDAERAALAGEMAALAGEDGAYVGDAFGAVHRKHASVFDVAAQLPAYQGPLVAAELEVLTRLTESPEQPYVVVLGGSKVSDKLAVIDNLLDKADTLLIGGGMLFTFLKAQGHEVGASLLEEDQLDTVRAYLRRSEAGAARIVLPTDIVMASGFAADAEHEVLAADALTSGAHGASAMGLDIGPETARAFAEQIRGAQTVFWNGPMGVFEFPAFAEGTRAVARALTEASAAGGLSVVGGGDSAAAVRTLGFADDAFGHISTGGGASLEYLEGKELPGVTALAGEGRA.

Substrate-binding positions include 24–26, R39, 62–65, R121, and R161; these read DLN and HLGR. ATP contacts are provided by residues K211, G307, E338, and 367–370; that span reads GGDS.

The protein belongs to the phosphoglycerate kinase family. In terms of assembly, monomer.

It localises to the cytoplasm. It carries out the reaction (2R)-3-phosphoglycerate + ATP = (2R)-3-phospho-glyceroyl phosphate + ADP. Its pathway is carbohydrate degradation; glycolysis; pyruvate from D-glyceraldehyde 3-phosphate: step 2/5. The sequence is that of Phosphoglycerate kinase from Micrococcus luteus (strain ATCC 4698 / DSM 20030 / JCM 1464 / CCM 169 / CCUG 5858 / IAM 1056 / NBRC 3333 / NCIMB 9278 / NCTC 2665 / VKM Ac-2230) (Micrococcus lysodeikticus).